The chain runs to 166 residues: 6,7-dimethyl-8-ribityllumazine synthase (166 aa).

Residues Phe-24, 58-60 (ALE), and 82-84 (AVI) contribute to the 5-amino-6-(D-ribitylamino)uracil site. 87 to 88 (ET) contacts (2S)-2-hydroxy-3-oxobutyl phosphate. The Proton donor role is filled by His-90. Asn-115 is a 5-amino-6-(D-ribitylamino)uracil binding site. Arg-129 is a binding site for (2S)-2-hydroxy-3-oxobutyl phosphate.

It belongs to the DMRL synthase family.

The catalysed reaction is (2S)-2-hydroxy-3-oxobutyl phosphate + 5-amino-6-(D-ribitylamino)uracil = 6,7-dimethyl-8-(1-D-ribityl)lumazine + phosphate + 2 H2O + H(+). It participates in cofactor biosynthesis; riboflavin biosynthesis; riboflavin from 2-hydroxy-3-oxobutyl phosphate and 5-amino-6-(D-ribitylamino)uracil: step 1/2. Functionally, catalyzes the formation of 6,7-dimethyl-8-ribityllumazine by condensation of 5-amino-6-(D-ribitylamino)uracil with 3,4-dihydroxy-2-butanone 4-phosphate. This is the penultimate step in the biosynthesis of riboflavin. The protein is 6,7-dimethyl-8-ribityllumazine synthase of Ralstonia pickettii (strain 12J).